Consider the following 140-residue polypeptide: Nucleoside diphosphate kinase (140 aa).

ATP contacts are provided by lysine 11, phenylalanine 59, arginine 87, threonine 93, arginine 104, and asparagine 114. Residue histidine 117 is the Pros-phosphohistidine intermediate of the active site.

It belongs to the NDK family. In terms of assembly, homotetramer. Mg(2+) is required as a cofactor.

The protein localises to the cytoplasm. It carries out the reaction a 2'-deoxyribonucleoside 5'-diphosphate + ATP = a 2'-deoxyribonucleoside 5'-triphosphate + ADP. The enzyme catalyses a ribonucleoside 5'-diphosphate + ATP = a ribonucleoside 5'-triphosphate + ADP. In terms of biological role, major role in the synthesis of nucleoside triphosphates other than ATP. The ATP gamma phosphate is transferred to the NDP beta phosphate via a ping-pong mechanism, using a phosphorylated active-site intermediate. The polypeptide is Nucleoside diphosphate kinase (Cereibacter sphaeroides (strain ATCC 17025 / ATH 2.4.3) (Rhodobacter sphaeroides)).